The chain runs to 316 residues: ATP synthase gamma chain (316 aa).

The protein belongs to the ATPase gamma chain family. F-type ATPases have 2 components, CF(1) - the catalytic core - and CF(0) - the membrane proton channel. CF(1) has five subunits: alpha(3), beta(3), gamma(1), delta(1), epsilon(1). CF(0) has three main subunits: a, b and c.

The protein resides in the cellular thylakoid membrane. Produces ATP from ADP in the presence of a proton gradient across the membrane. The gamma chain is believed to be important in regulating ATPase activity and the flow of protons through the CF(0) complex. This chain is ATP synthase gamma chain, found in Synechococcus elongatus (strain ATCC 33912 / PCC 7942 / FACHB-805) (Anacystis nidulans R2).